The chain runs to 427 residues: Acetylornithine aminotransferase (427 aa).

The tract at residues 1 to 23 (MSLQTLIEQATNPPESGSAASSP) is disordered. Residues 124-125 (GA) and F157 each bind pyridoxal 5'-phosphate. R160 contributes to the N(2)-acetyl-L-ornithine binding site. Residue 248–251 (DEVQ) coordinates pyridoxal 5'-phosphate. N6-(pyridoxal phosphate)lysine is present on K277. S304 contributes to the N(2)-acetyl-L-ornithine binding site. Residue T305 coordinates pyridoxal 5'-phosphate.

It belongs to the class-III pyridoxal-phosphate-dependent aminotransferase family. ArgD subfamily. Homodimer. It depends on pyridoxal 5'-phosphate as a cofactor.

It localises to the cytoplasm. The catalysed reaction is N(2)-acetyl-L-ornithine + 2-oxoglutarate = N-acetyl-L-glutamate 5-semialdehyde + L-glutamate. Its pathway is amino-acid biosynthesis; L-arginine biosynthesis; N(2)-acetyl-L-ornithine from L-glutamate: step 4/4. The polypeptide is Acetylornithine aminotransferase (Nostoc sp. (strain PCC 7120 / SAG 25.82 / UTEX 2576)).